Consider the following 430-residue polypeptide: Signal recognition particle protein (430 aa).

Residues 105 to 112 (GLQGSGKT), 187 to 191 (DTAGR), and 245 to 248 (TKLD) contribute to the GTP site.

Belongs to the GTP-binding SRP family. SRP54 subfamily. In terms of assembly, part of the signal recognition particle protein translocation system, which is composed of SRP and FtsY.

It localises to the cytoplasm. The enzyme catalyses GTP + H2O = GDP + phosphate + H(+). Its function is as follows. Involved in targeting and insertion of nascent membrane proteins into the cytoplasmic membrane. Binds to the hydrophobic signal sequence of the ribosome-nascent chain (RNC) as it emerges from the ribosomes. The SRP-RNC complex is then targeted to the cytoplasmic membrane where it interacts with the SRP receptor FtsY. This chain is Signal recognition particle protein, found in Thermus aquaticus.